The sequence spans 291 residues: 5'-3' exonuclease (291 aa).

Positions 176–269 (APYQVVEYKG…DLTGLKPIQK (94 aa)) constitute a 5'-3' exonuclease domain.

Functionally, 5'-3' exonuclease acting preferentially on double-stranded DNA. The chain is 5'-3' exonuclease (polA) from Mycoplasma genitalium (strain ATCC 33530 / DSM 19775 / NCTC 10195 / G37) (Mycoplasmoides genitalium).